The sequence spans 742 residues: Photosystem I P700 chlorophyll a apoprotein A2 (742 aa).

Helical transmembrane passes span 46–69 (LFSTHFGHLAIIALWVAGNLFHIA), 135–158 (LFQASIFMSILACWTLFAGWLHLQ), 175–199 (LNHHLAVLFGFSSIAWTGHLVHVAI), 273–291 (IAHHHIAIGTVFIIAGHMY), 336–359 (LHFQLGLALAALGVATSLVAQHMG), 375–401 (SALYTHHQYIAMFLMVGAFAHGAIFFV), 423–445 (ALISHLSWVTMILGFHTLGIYVH), and 525–543 (FLVHHAIALGLHTTALILI). Residues C567 and C576 each coordinate [4Fe-4S] cluster. 2 helical membrane-spanning segments follow: residues 583–604 (AMYLAMFWALNLIAWVTFYWHW) and 651–673 (LSVWAWMFLFGHLVWATGFMFLI). Divinyl chlorophyll a-binding residues include H662, M670, and Y678. W679 provides a ligand contact to phylloquinone. A helical membrane pass occupies residues 715–735 (LVGLAHFTIGNILTFGAFVIA).

Belongs to the PsaA/PsaB family. As to quaternary structure, the PsaA/B heterodimer binds the P700 divinyl chlorophyll special pair and subsequent electron acceptors. PSI consists of a core antenna complex that captures photons, and an electron transfer chain that converts photonic excitation into a charge separation. The cyanobacterial PSI reaction center is composed of one copy each of PsaA,B,C,D,E,F,I,J,K,L,M and X, and forms trimeric complexes. PSI electron transfer chain: 5 divinyl chlorophyll a, 1 divinyl chlorophyll a', 2 phylloquinones and 3 4Fe-4S clusters. PSI core antenna: 90 divinyl chlorophyll a, 22 carotenoids, 3 phospholipids and 1 galactolipid. P700 is a divinyl chlorophyll a/divinyl chlorophyll a' dimer, A0 is one or more divinyl chlorophyll a, A1 is one or both phylloquinones and FX is a shared 4Fe-4S iron-sulfur center. serves as cofactor.

The protein resides in the cellular thylakoid membrane. The catalysed reaction is reduced [plastocyanin] + hnu + oxidized [2Fe-2S]-[ferredoxin] = oxidized [plastocyanin] + reduced [2Fe-2S]-[ferredoxin]. In terms of biological role, psaA and PsaB bind P700, the primary electron donor of photosystem I (PSI), as well as the electron acceptors A0, A1 and FX. PSI is a plastocyanin/cytochrome c6-ferredoxin oxidoreductase, converting photonic excitation into a charge separation, which transfers an electron from the donor P700 chlorophyll pair to the spectroscopically characterized acceptors A0, A1, FX, FA and FB in turn. Oxidized P700 is reduced on the lumenal side of the thylakoid membrane by plastocyanin or cytochrome c6. This is Photosystem I P700 chlorophyll a apoprotein A2 from Prochlorococcus marinus subsp. pastoris (strain CCMP1986 / NIES-2087 / MED4).